The primary structure comprises 589 residues: 2-succinyl-5-enolpyruvyl-6-hydroxy-3-cyclohexene-1-carboxylate synthase (589 aa).

A disordered region spans residues 198 to 222 (DAATTEGAHDSHAPSQPTRGPRKLP).

The protein belongs to the TPP enzyme family. MenD subfamily. In terms of assembly, homodimer. Mg(2+) serves as cofactor. Mn(2+) is required as a cofactor. Requires thiamine diphosphate as cofactor.

The catalysed reaction is isochorismate + 2-oxoglutarate + H(+) = 5-enolpyruvoyl-6-hydroxy-2-succinyl-cyclohex-3-ene-1-carboxylate + CO2. Its pathway is quinol/quinone metabolism; 1,4-dihydroxy-2-naphthoate biosynthesis; 1,4-dihydroxy-2-naphthoate from chorismate: step 2/7. The protein operates within quinol/quinone metabolism; menaquinone biosynthesis. In terms of biological role, catalyzes the thiamine diphosphate-dependent decarboxylation of 2-oxoglutarate and the subsequent addition of the resulting succinic semialdehyde-thiamine pyrophosphate anion to isochorismate to yield 2-succinyl-5-enolpyruvyl-6-hydroxy-3-cyclohexene-1-carboxylate (SEPHCHC). This chain is 2-succinyl-5-enolpyruvyl-6-hydroxy-3-cyclohexene-1-carboxylate synthase, found in Corynebacterium jeikeium (strain K411).